The following is a 484-amino-acid chain: Aldehyde dehydrogenase family 3 member F1 (484 aa).

Residue 192–197 (GSPKIG) participates in NAD(+) binding. Glu214 (proton acceptor) is an active-site residue. The Nucleophile role is filled by Cys252.

Belongs to the aldehyde dehydrogenase family. Homotetramer. In terms of tissue distribution, constituively expressed at low levels.

The catalysed reaction is an aldehyde + NAD(+) + H2O = a carboxylate + NADH + 2 H(+). The chain is Aldehyde dehydrogenase family 3 member F1 (ALDH3F1) from Arabidopsis thaliana (Mouse-ear cress).